The primary structure comprises 518 residues: ATP synthase subunit alpha (518 aa).

Residue 170–177 (GDRQTGKT) coordinates ATP.

Belongs to the ATPase alpha/beta chains family. In terms of assembly, F-type ATPases have 2 components, CF(1) - the catalytic core - and CF(0) - the membrane proton channel. CF(1) has five subunits: alpha(3), beta(3), gamma(1), delta(1), epsilon(1). CF(0) has three main subunits: a(1), b(2) and c(9-12). The alpha and beta chains form an alternating ring which encloses part of the gamma chain. CF(1) is attached to CF(0) by a central stalk formed by the gamma and epsilon chains, while a peripheral stalk is formed by the delta and b chains.

Its subcellular location is the cell membrane. It catalyses the reaction ATP + H2O + 4 H(+)(in) = ADP + phosphate + 5 H(+)(out). Produces ATP from ADP in the presence of a proton gradient across the membrane. The alpha chain is a regulatory subunit. This Mycoplasmoides gallisepticum (strain R(low / passage 15 / clone 2)) (Mycoplasma gallisepticum) protein is ATP synthase subunit alpha.